A 450-amino-acid chain; its full sequence is Probable malate:quinone oxidoreductase (450 aa).

It belongs to the MQO family. It depends on FAD as a cofactor.

It catalyses the reaction (S)-malate + a quinone = a quinol + oxaloacetate. It functions in the pathway carbohydrate metabolism; tricarboxylic acid cycle; oxaloacetate from (S)-malate (quinone route): step 1/1. The chain is Probable malate:quinone oxidoreductase from Helicobacter pylori (strain P12).